Consider the following 523-residue polypeptide: Uridylate cyclase (523 aa).

Guanylate cyclase domains lie at 69 to 209 and 318 to 438; these read VHVY…AKLA and MSIF…IGIR. A ribonucleoside 5'-triphosphate is bound by residues Y72 and R125. The Mn(2+) site is built by D323, I324, and D372.

The protein belongs to the adenylyl cyclase class-4/guanylyl cyclase family. Pyrimidine cyclase subfamily. As to quaternary structure, monomer. Requires Mn(2+) as cofactor.

The protein localises to the cytoplasm. It catalyses the reaction UTP = 3',5'-cyclic UMP + diphosphate. In terms of biological role, pycsar (pyrimidine cyclase system for antiphage resistance) provides immunity against bacteriophage. The pyrimidine cyclase (PycC) synthesizes cyclic nucleotides in response to infection; these serve as specific second messenger signals. The signals activate the nearby effector, leading to bacterial cell death and abortive phage infection. A clade A Pycsar system. Its function is as follows. The pyrimidine cyclase gene of a two-gene Pycsar system, generates cyclic UMP (cUMP) from UTP, has little to no activity on ATP, CTP or GTP. Expression of this and effector RsPycTM (AC A0A4R2UGS4) probably confers resistance to some bacteriophage. The genes are probably only expressed in response to bacteriophage infection. The protein is Uridylate cyclase of Rhizobium sp. (strain PP-F2F-G36).